The sequence spans 608 residues: Aspartate--tRNA(Asp/Asn) ligase (608 aa).

Glu175 is a binding site for L-aspartate. The segment at 199–202 is aspartate; the sequence is QLFK. L-aspartate is bound at residue Arg221. ATP-binding positions include 221–223 and Gln230; that span reads RDE. Residue His453 participates in L-aspartate binding. Glu487 lines the ATP pocket. Arg494 lines the L-aspartate pocket. 539–542 lines the ATP pocket; the sequence is GWDR. Residues 566–608 are disordered; that stretch reads IDPLTDAPAAITPQQRKEAGIDAKPKPKAEAQAEAQAEESAEK. A compositionally biased stretch (basic and acidic residues) spans 580 to 596; it reads QRKEAGIDAKPKPKAEA.

This sequence belongs to the class-II aminoacyl-tRNA synthetase family. Type 1 subfamily. In terms of assembly, homodimer.

The protein resides in the cytoplasm. The enzyme catalyses tRNA(Asx) + L-aspartate + ATP = L-aspartyl-tRNA(Asx) + AMP + diphosphate. Functionally, aspartyl-tRNA synthetase with relaxed tRNA specificity since it is able to aspartylate not only its cognate tRNA(Asp) but also tRNA(Asn). Reaction proceeds in two steps: L-aspartate is first activated by ATP to form Asp-AMP and then transferred to the acceptor end of tRNA(Asp/Asn). This chain is Aspartate--tRNA(Asp/Asn) ligase, found in Corynebacterium glutamicum (strain ATCC 13032 / DSM 20300 / JCM 1318 / BCRC 11384 / CCUG 27702 / LMG 3730 / NBRC 12168 / NCIMB 10025 / NRRL B-2784 / 534).